A 1584-amino-acid polypeptide reads, in one-letter code: Dicer-like protein 1 (1584 aa).

The disordered stretch occupies residues 31–60 (EDVVSDNDDRGNASDVESEDGVKRWTVNPE). One can recognise a Helicase ATP-binding domain in the interval 129-310 (LFERAKQQNT…RAAAELEALL (182 aa)). 142–149 (LDTGSGKT) contributes to the ATP binding site. The short motif at 255–258 (DEAH) is the DEAH box element. One can recognise a Helicase C-terminal domain in the interval 448–621 (KVIMLVRILR…EALPEDRKLT (174 aa)). Residues 654–744 (SLVCLANFTA…QSVFTKQLPE (91 aa)) enclose the Dicer dsRNA-binding fold domain. The region spanning 894–1028 (KALAYVSENE…LILEPMRISP (135 aa)) is the PAZ domain. RNase III domains lie at 1052 to 1207 (VALD…LTGQ) and 1258 to 1424 (AKKF…VDSE). Mg(2+) is bound by residues glutamate 1298, aspartate 1410, and glutamate 1413. A DRBM domain is found at 1458 to 1545 (TFVANMMAHK…AKKAIKLLEG (88 aa)). 4 residues coordinate Zn(2+): cysteine 1470, histidine 1516, cysteine 1557, and cysteine 1559.

Belongs to the helicase family. Dicer subfamily. Requires Mg(2+) as cofactor. Mn(2+) is required as a cofactor.

Dicer-like endonuclease involved in cleaving double-stranded RNA in the RNA interference (RNAi) pathway. Produces 21 to 25 bp dsRNAs (siRNAs) which target the selective destruction of homologous RNAs leading to sequence-specific suppression of gene expression, called post-transcriptional gene silencing (PTGS). Part of a broad host defense response against viral infection and transposons. Controls the expression of the non-LTR retrotransposon Tad in the African strain, Adiomopoume. The chain is Dicer-like protein 1 (dcl-1) from Neurospora crassa (strain ATCC 24698 / 74-OR23-1A / CBS 708.71 / DSM 1257 / FGSC 987).